The following is a 489-amino-acid chain: NF-kappa-B inhibitor cactus (489 aa).

Over residues 1–26 (MPSPTKAAEAATKATATSDCSCSAAS) the composition is skewed to low complexity. 2 disordered regions span residues 1 to 138 (MPSP…SMRL) and 163 to 203 (NNLG…APPS). Serine 45 bears the Phosphoserine; by PKC mark. Positions 69–86 (NETSDSGFISGPQSSQIC) are enriched in polar residues. Serine 135 carries the phosphoserine; by PKC modification. A compositionally biased stretch (polar residues) spans 163–180 (NNLGQSSSTQITGRSKFQ). Threonine 174 carries the post-translational modification Phosphothreonine; by PKC. Over residues 181–203 (SSTASTANANPSGXGATSSAPPS) the composition is skewed to low complexity. ANK repeat units follow at residues 220–252 (DGDT…LLNI), 256–285 (VAQT…EVRD), 287–316 (HGNT…ATEI), 350–379 (DGER…DINA), and 384–413 (SGRT…KLNL). Threonine 308 bears the Phosphothreonine; by PKC mark. Serine 384 is subject to Phosphoserine; by PKC.

The protein localises to the cytoplasm. Functionally, involved in the formation of the dorsoventral pattern. It inhibits nuclear translocation of the dorsal morphogen in the dorsal region of the embryo. This Drosophila yakuba (Fruit fly) protein is NF-kappa-B inhibitor cactus (cact).